The chain runs to 268 residues: Tryptophan synthase alpha chain (268 aa).

Residues glutamate 49 and aspartate 60 each act as proton acceptor in the active site.

The protein belongs to the TrpA family. In terms of assembly, tetramer of two alpha and two beta chains.

The enzyme catalyses (1S,2R)-1-C-(indol-3-yl)glycerol 3-phosphate + L-serine = D-glyceraldehyde 3-phosphate + L-tryptophan + H2O. Its pathway is amino-acid biosynthesis; L-tryptophan biosynthesis; L-tryptophan from chorismate: step 5/5. The alpha subunit is responsible for the aldol cleavage of indoleglycerol phosphate to indole and glyceraldehyde 3-phosphate. This is Tryptophan synthase alpha chain from Aeromonas salmonicida (strain A449).